The following is a 106-amino-acid chain: Large ribosomal subunit protein eL42 (106 aa).

The tract at residues 36 to 56 (FAQGKRRYDRKQSGYGGQTKP) is disordered.

Belongs to the eukaryotic ribosomal protein eL42 family.

In Coprinopsis cinerea (strain Okayama-7 / 130 / ATCC MYA-4618 / FGSC 9003) (Inky cap fungus), this protein is Large ribosomal subunit protein eL42 (RPL44).